We begin with the raw amino-acid sequence, 244 residues long: Guanine nucleotide exchange factor rei-1 (244 aa).

Coiled-coil stretches lie at residues 6–39 (DQLI…KKQF) and 81–144 (VQQA…KAEK). Residues 221-244 (DQIHQERSSQSSLAPSSDAESDSS) form a disordered region. Low complexity predominate over residues 228 to 238 (SSQSSLAPSSD).

The protein belongs to the SH3BP5 family. In terms of assembly, homodimer, tetramer and multimer. Interacts with rab-11.1. Binds preferentially to the GDP-bound form of rab-11.1. As to expression, expressed in germ cells.

It is found in the cytoplasmic granule. The protein localises to the golgi apparatus membrane. Guanine nucleotide exchange factor for Rab GTPase Rab-11.1. Spatially and temporally regulates the distribution of Rab-11.1 to target membranes during embryogenesis. Plays a role in cytokinesis, probably by targeting rab-11.1 to the cleavage furrows. The protein is Guanine nucleotide exchange factor rei-1 of Caenorhabditis elegans.